The following is a 291-amino-acid chain: ATP synthase gamma chain (291 aa).

The protein belongs to the ATPase gamma chain family. F-type ATPases have 2 components, CF(1) - the catalytic core - and CF(0) - the membrane proton channel. CF(1) has five subunits: alpha(3), beta(3), gamma(1), delta(1), epsilon(1). CF(0) has three main subunits: a, b and c.

The protein resides in the cell inner membrane. In terms of biological role, produces ATP from ADP in the presence of a proton gradient across the membrane. The gamma chain is believed to be important in regulating ATPase activity and the flow of protons through the CF(0) complex. In Burkholderia multivorans (strain ATCC 17616 / 249), this protein is ATP synthase gamma chain.